A 376-amino-acid chain; its full sequence is MTATAQRQRPIDTTGAGQRAQQAELHPELNRAHVRFINLGKTYHGKQGPVEALGNIDLAVQHGEIFGIIGRSGAGKSSLIRTINRLEQPSNGRVLIDQVDIGEFDEDKLVELRRRIGMIFQHFNLMSAKNVWQNVELPLKVAGVPREQRARKVAQLLELVGLQDKHKAYPAQLSGGQKQRVGIARALVHDPAILLCDEATSALDPETTQSILGLLREINQRLGLTIVLITHEMAVIRDICHRVVVLEQGRIVEQGPVWQVFGDPQHEVSKTLLAPLQTGLPKEWAERLSDQPQRPDAALLLDVHFTGVSAEGPDLAALFTALGGKVELLQGGVERIQDRAIGHLILSVAGSPHSRDELLARARTLAPRAEVLGYVG.

The segment at 1 to 25 is disordered; it reads MTATAQRQRPIDTTGAGQRAQQAEL. Positions 34–273 constitute an ABC transporter domain; it reads VRFINLGKTY…PQHEVSKTLL (240 aa). Residue 70-77 coordinates ATP; it reads GRSGAGKS.

Belongs to the ABC transporter superfamily. Methionine importer (TC 3.A.1.24) family. In terms of assembly, the complex is composed of two ATP-binding proteins (MetN), two transmembrane proteins (MetI) and a solute-binding protein (MetQ).

The protein resides in the cell inner membrane. It carries out the reaction L-methionine(out) + ATP + H2O = L-methionine(in) + ADP + phosphate + H(+). The enzyme catalyses D-methionine(out) + ATP + H2O = D-methionine(in) + ADP + phosphate + H(+). In terms of biological role, part of the ABC transporter complex MetNIQ involved in methionine import. Responsible for energy coupling to the transport system. This Pseudomonas syringae pv. syringae (strain B728a) protein is Methionine import ATP-binding protein MetN 2.